The sequence spans 381 residues: tRNA N6-adenosine threonylcarbamoyltransferase (381 aa).

His-114 and His-118 together coordinate Fe cation. Substrate is bound by residues 142–146, Asp-178, Gly-191, Asp-195, and Asn-321; that span reads VVSGG. Position 349 (Asp-349) interacts with Fe cation.

This sequence belongs to the KAE1 / TsaD family. Fe(2+) serves as cofactor.

The protein localises to the cytoplasm. It catalyses the reaction L-threonylcarbamoyladenylate + adenosine(37) in tRNA = N(6)-L-threonylcarbamoyladenosine(37) in tRNA + AMP + H(+). Required for the formation of a threonylcarbamoyl group on adenosine at position 37 (t(6)A37) in tRNAs that read codons beginning with adenine. Is involved in the transfer of the threonylcarbamoyl moiety of threonylcarbamoyl-AMP (TC-AMP) to the N6 group of A37, together with TsaE and TsaB. TsaD likely plays a direct catalytic role in this reaction. The polypeptide is tRNA N6-adenosine threonylcarbamoyltransferase (Koribacter versatilis (strain Ellin345)).